We begin with the raw amino-acid sequence, 187 residues long: Ribosome-recycling factor (187 aa).

The protein belongs to the RRF family.

Its subcellular location is the cytoplasm. Responsible for the release of ribosomes from messenger RNA at the termination of protein biosynthesis. May increase the efficiency of translation by recycling ribosomes from one round of translation to another. This Ligilactobacillus salivarius (strain UCC118) (Lactobacillus salivarius) protein is Ribosome-recycling factor.